A 152-amino-acid polypeptide reads, in one-letter code: Nucleoside diphosphate kinase B (152 aa).

Residues 1–66 (MAHAERTFIA…DRPFFPGLVK (66 aa)) are interaction with AKAP13. Residues Lys-12, Phe-60, Arg-88, Thr-94, Arg-105, and Asn-115 each contribute to the ATP site. The Pros-phosphohistidine intermediate role is filled by His-118.

It belongs to the NDK family. Hexamer of two different chains: An and B (A6, A5B, A4B2, A3B3, A2B4, AB5, B6). Interacts with CAPN8. Interacts with AKAP13. Interacts with ITGB1BP1 (via C-terminal domain region). Interacts with BCL2L10. Requires Mg(2+) as cofactor.

It localises to the cytoplasm. The protein resides in the cell projection. It is found in the lamellipodium. The protein localises to the ruffle. Its subcellular location is the nucleus. It carries out the reaction a 2'-deoxyribonucleoside 5'-diphosphate + ATP = a 2'-deoxyribonucleoside 5'-triphosphate + ADP. The catalysed reaction is a ribonucleoside 5'-diphosphate + ATP = a ribonucleoside 5'-triphosphate + ADP. It catalyses the reaction ATP + protein L-histidine = ADP + protein N-phospho-L-histidine.. In terms of biological role, major role in the synthesis of nucleoside triphosphates other than ATP. The ATP gamma phosphate is transferred to the NDP beta phosphate via a ping-pong mechanism, using a phosphorylated active-site intermediate. Negatively regulates Rho activity by interacting with AKAP13/LBC. Acts as a transcriptional activator of the MYC gene; binds DNA non-specifically. Binds to both single-stranded guanine- and cytosine-rich strands within the nuclease hypersensitive element (NHE) III(1) region of the MYC gene promoter. Does not bind to duplex NHE III(1). Has G-quadruplex (G4) DNA-binding activity, which is independent of its nucleotide-binding and kinase activity. Binds both folded and unfolded G4 with similar low nanomolar affinities. Stabilizes folded G4s regardless of whether they are prefolded or not. Exhibits histidine protein kinase activity. This Bos taurus (Bovine) protein is Nucleoside diphosphate kinase B (NME2).